A 28-amino-acid polypeptide reads, in one-letter code: Cycloviolin-B (28 aa).

Residues 1 to 28 (GTACGESCYVLPCFTVGCTCTSSQCFKN) constitute a cross-link (cyclopeptide (Gly-Asn)). 3 disulfides stabilise this stretch: cysteine 4/cysteine 18, cysteine 8/cysteine 20, and cysteine 13/cysteine 25.

This is a cyclic peptide.

Functionally, probably participates in a plant defense mechanism. Has anti-HIV activity. This is Cycloviolin-B from Leonia cymosa (Sacha uba).